The sequence spans 97 residues: Co-chaperonin GroES (97 aa).

It belongs to the GroES chaperonin family. As to quaternary structure, heptamer of 7 subunits arranged in a ring. Interacts with the chaperonin GroEL.

The protein resides in the cytoplasm. Together with the chaperonin GroEL, plays an essential role in assisting protein folding. The GroEL-GroES system forms a nano-cage that allows encapsulation of the non-native substrate proteins and provides a physical environment optimized to promote and accelerate protein folding. GroES binds to the apical surface of the GroEL ring, thereby capping the opening of the GroEL channel. In Baumannia cicadellinicola subsp. Homalodisca coagulata, this protein is Co-chaperonin GroES.